The following is a 203-amino-acid chain: Elongation factor Ts (203 aa).

The tract at residues 80–83 (TDFV) is involved in Mg(2+) ion dislocation from EF-Tu.

It belongs to the EF-Ts family.

It is found in the cytoplasm. Functionally, associates with the EF-Tu.GDP complex and induces the exchange of GDP to GTP. It remains bound to the aminoacyl-tRNA.EF-Tu.GTP complex up to the GTP hydrolysis stage on the ribosome. This Moorella thermoacetica (strain ATCC 39073 / JCM 9320) protein is Elongation factor Ts.